A 473-amino-acid polypeptide reads, in one-letter code: Photosystem II CP43 reaction center protein (473 aa).

A propeptide spanning residues 1–14 (MKTLYSLRRFYHVE) is cleaved from the precursor. An N-acetylthreonine modification is found at threonine 15. The residue at position 15 (threonine 15) is a Phosphothreonine. The next 5 helical transmembrane spans lie at 69 to 93 (LFEVAHFVPEKPMYEQGLILLPHLA), 134 to 155 (LLGPETLEESFPFFGYVWKDRN), 178 to 200 (KALYFGGVYDTWAPGGGDVRKIT), 255 to 275 (KPFAWARRALVWSGEAYLSYS), and 291 to 312 (WFNNTAYPSEFYGPTGPEASQA). Glutamate 367 is a binding site for [CaMn4O5] cluster. The chain crosses the membrane as a helical span at residues 447 to 471 (RARAAAAGFEKGIDRDFEPVLSMTP).

Belongs to the PsbB/PsbC family. PsbC subfamily. In terms of assembly, PSII is composed of 1 copy each of membrane proteins PsbA, PsbB, PsbC, PsbD, PsbE, PsbF, PsbH, PsbI, PsbJ, PsbK, PsbL, PsbM, PsbT, PsbX, PsbY, PsbZ, Psb30/Ycf12, at least 3 peripheral proteins of the oxygen-evolving complex and a large number of cofactors. It forms dimeric complexes. Binds multiple chlorophylls and provides some of the ligands for the Ca-4Mn-5O cluster of the oxygen-evolving complex. It may also provide a ligand for a Cl- that is required for oxygen evolution. PSII binds additional chlorophylls, carotenoids and specific lipids. is required as a cofactor.

The protein resides in the plastid. It is found in the chloroplast thylakoid membrane. In terms of biological role, one of the components of the core complex of photosystem II (PSII). It binds chlorophyll and helps catalyze the primary light-induced photochemical processes of PSII. PSII is a light-driven water:plastoquinone oxidoreductase, using light energy to abstract electrons from H(2)O, generating O(2) and a proton gradient subsequently used for ATP formation. This chain is Photosystem II CP43 reaction center protein, found in Manihot esculenta (Cassava).